The following is a 339-amino-acid chain: Ferrochelatase (339 aa).

2 residues coordinate Fe cation: H202 and E283.

It belongs to the ferrochelatase family.

The protein localises to the cytoplasm. It carries out the reaction heme b + 2 H(+) = protoporphyrin IX + Fe(2+). It functions in the pathway porphyrin-containing compound metabolism; protoheme biosynthesis; protoheme from protoporphyrin-IX: step 1/1. Its function is as follows. Catalyzes the ferrous insertion into protoporphyrin IX. This is Ferrochelatase from Psychrobacter arcticus (strain DSM 17307 / VKM B-2377 / 273-4).